A 729-amino-acid polypeptide reads, in one-letter code: Fatty acid oxidation complex subunit alpha (729 aa).

The segment at 1 to 189 (MLYKGDTLYL…KIGLVDGVVK (189 aa)) is enoyl-CoA hydratase/isomerase. Asp296 provides a ligand contact to substrate. The interval 311–729 (ETPKQAAVLG…ARPVGSLKTA (419 aa)) is 3-hydroxyacyl-CoA dehydrogenase. NAD(+) contacts are provided by residues Met324, Asp343, 400 to 402 (VVE), Lys407, and Ser429. The active-site For 3-hydroxyacyl-CoA dehydrogenase activity is the His450. Residue Asn453 participates in NAD(+) binding. Residues Asn500 and Tyr660 each contribute to the substrate site. The tract at residues 708–729 (RHNEPYYPPVEPARPVGSLKTA) is disordered.

In the N-terminal section; belongs to the enoyl-CoA hydratase/isomerase family. This sequence in the C-terminal section; belongs to the 3-hydroxyacyl-CoA dehydrogenase family. Heterotetramer of two alpha chains (FadB) and two beta chains (FadA).

The enzyme catalyses a (3S)-3-hydroxyacyl-CoA + NAD(+) = a 3-oxoacyl-CoA + NADH + H(+). The catalysed reaction is a (3S)-3-hydroxyacyl-CoA = a (2E)-enoyl-CoA + H2O. It carries out the reaction a 4-saturated-(3S)-3-hydroxyacyl-CoA = a (3E)-enoyl-CoA + H2O. It catalyses the reaction (3S)-3-hydroxybutanoyl-CoA = (3R)-3-hydroxybutanoyl-CoA. The enzyme catalyses a (3Z)-enoyl-CoA = a 4-saturated (2E)-enoyl-CoA. The catalysed reaction is a (3E)-enoyl-CoA = a 4-saturated (2E)-enoyl-CoA. The protein operates within lipid metabolism; fatty acid beta-oxidation. Functionally, involved in the aerobic and anaerobic degradation of long-chain fatty acids via beta-oxidation cycle. Catalyzes the formation of 3-oxoacyl-CoA from enoyl-CoA via L-3-hydroxyacyl-CoA. It can also use D-3-hydroxyacyl-CoA and cis-3-enoyl-CoA as substrate. This Salmonella enteritidis PT4 (strain P125109) protein is Fatty acid oxidation complex subunit alpha.